We begin with the raw amino-acid sequence, 281 residues long: Ribosomal protein L11 methyltransferase (281 aa).

S-adenosyl-L-methionine-binding residues include T133, G154, D175, and N216.

The protein belongs to the methyltransferase superfamily. PrmA family.

The protein resides in the cytoplasm. It carries out the reaction L-lysyl-[protein] + 3 S-adenosyl-L-methionine = N(6),N(6),N(6)-trimethyl-L-lysyl-[protein] + 3 S-adenosyl-L-homocysteine + 3 H(+). Methylates ribosomal protein L11. In Campylobacter jejuni subsp. jejuni serotype O:2 (strain ATCC 700819 / NCTC 11168), this protein is Ribosomal protein L11 methyltransferase.